The chain runs to 480 residues: UDP-glycosyltransferase 72B1 (480 aa).

H19 functions as the Proton acceptor in the catalytic mechanism. D117 acts as the Charge relay in catalysis. S277, W346, A347, and H364 together coordinate UDP. The UDP-alpha-D-glucose site is built by S277, W346, A347, H364, W367, N368, S369, E372, Y386, E388, and Q389. 4 residues coordinate UDP: N368, S369, E372, and Y386.

The protein belongs to the UDP-glycosyltransferase family.

It catalyses the reaction hydroquinone + UDP-alpha-D-glucose = hydroquinone O-beta-D-glucopyranoside + UDP + H(+). Functionally, bifunctional O-glycosyltransferase and N-glycosyltransferase that can detoxify xenobiotics. Possesses high activity to metabolize the persistent pollutants 2,4,5-trichlorophenol (TCP) and 3,4-dichloroaniline (DCA). Also active on benzoates and benzoate derivatives in vitro. This is UDP-glycosyltransferase 72B1 (UGT72B1) from Arabidopsis thaliana (Mouse-ear cress).